The primary structure comprises 1293 residues: DNA-directed RNA polymerase subunit beta' (1293 aa).

4 residues coordinate Zn(2+): Cys60, Cys62, Cys75, and Cys78. The Mg(2+) site is built by Asp535, Asp537, and Asp539. Positions 877, 953, 960, and 963 each coordinate Zn(2+).

Belongs to the RNA polymerase beta' chain family. In terms of assembly, the RNAP catalytic core consists of 2 alpha, 1 beta, 1 beta' and 1 omega subunit. When a sigma factor is associated with the core the holoenzyme is formed, which can initiate transcription. Mg(2+) is required as a cofactor. Requires Zn(2+) as cofactor.

It catalyses the reaction RNA(n) + a ribonucleoside 5'-triphosphate = RNA(n+1) + diphosphate. Its function is as follows. DNA-dependent RNA polymerase catalyzes the transcription of DNA into RNA using the four ribonucleoside triphosphates as substrates. The chain is DNA-directed RNA polymerase subunit beta' from Kineococcus radiotolerans (strain ATCC BAA-149 / DSM 14245 / SRS30216).